Here is a 337-residue protein sequence, read N- to C-terminus: Fructose-1,6-bisphosphatase class 1 (337 aa).

Residues E89, D112, L114, and D115 each coordinate Mg(2+). Substrate is bound by residues 115 to 118, N208, Y241, and K271; that span reads DGSS. A Mg(2+)-binding site is contributed by E277.

This sequence belongs to the FBPase class 1 family. Homotetramer. The cofactor is Mg(2+).

Its subcellular location is the cytoplasm. The enzyme catalyses beta-D-fructose 1,6-bisphosphate + H2O = beta-D-fructose 6-phosphate + phosphate. Its pathway is carbohydrate biosynthesis; gluconeogenesis. The polypeptide is Fructose-1,6-bisphosphatase class 1 (Yersinia pseudotuberculosis serotype O:1b (strain IP 31758)).